Here is a 220-residue protein sequence, read N- to C-terminus: MDWIISDGLVPYEDALATMEARVAAISEGRAPEMIWLLEHPPLYTAGTSADPADLTDPDRFPVHTARRGGQYTYHGPGQRVVYVMLDLGKRGRDVRQFVCRMEAWVIATLAEFNVTGERREGRVGVWVQRQDKPRTAAGQLQEDKIAAIGVRLRKWVSFHGLSINVEPDLDHFSGIVPCGITEHGVTSLVDLGLPVTMADVDVALRKCFEETFGPLPVEA.

Residues 29–217 (GRAPEMIWLL…CFEETFGPLP (189 aa)) enclose the BPL/LPL catalytic domain. Residues 68–75 (RGGQYTYH), 148–150 (AIG), and 161–163 (GLS) contribute to the substrate site. Cys179 functions as the Acyl-thioester intermediate in the catalytic mechanism.

Belongs to the LipB family.

It localises to the cytoplasm. The catalysed reaction is octanoyl-[ACP] + L-lysyl-[protein] = N(6)-octanoyl-L-lysyl-[protein] + holo-[ACP] + H(+). It participates in protein modification; protein lipoylation via endogenous pathway; protein N(6)-(lipoyl)lysine from octanoyl-[acyl-carrier-protein]: step 1/2. Catalyzes the transfer of endogenously produced octanoic acid from octanoyl-acyl-carrier-protein onto the lipoyl domains of lipoate-dependent enzymes. Lipoyl-ACP can also act as a substrate although octanoyl-ACP is likely to be the physiological substrate. In Dinoroseobacter shibae (strain DSM 16493 / NCIMB 14021 / DFL 12), this protein is Octanoyltransferase.